A 97-amino-acid polypeptide reads, in one-letter code: Large ribosomal subunit protein uL23 (97 aa).

This sequence belongs to the universal ribosomal protein uL23 family. As to quaternary structure, part of the 50S ribosomal subunit. Contacts protein L29, and trigger factor when it is bound to the ribosome.

Its function is as follows. One of the early assembly proteins it binds 23S rRNA. One of the proteins that surrounds the polypeptide exit tunnel on the outside of the ribosome. Forms the main docking site for trigger factor binding to the ribosome. The protein is Large ribosomal subunit protein uL23 of Myxococcus xanthus (strain DK1622).